Reading from the N-terminus, the 99-residue chain is Nucleoid-associated protein LACR_0106 (99 aa).

This sequence belongs to the YbaB/EbfC family. In terms of assembly, homodimer.

Its subcellular location is the cytoplasm. It localises to the nucleoid. Binds to DNA and alters its conformation. May be involved in regulation of gene expression, nucleoid organization and DNA protection. This Lactococcus lactis subsp. cremoris (strain SK11) protein is Nucleoid-associated protein LACR_0106.